The sequence spans 441 residues: Serine--tRNA ligase (441 aa).

250-252 (TSE) is a binding site for L-serine. ATP is bound by residues 281–283 (RRE) and Val-297. L-serine is bound at residue Glu-304. Position 368 to 371 (368 to 371 (EIVS)) interacts with ATP. Thr-402 lines the L-serine pocket.

It belongs to the class-II aminoacyl-tRNA synthetase family. Type-1 seryl-tRNA synthetase subfamily. In terms of assembly, homodimer. The tRNA molecule binds across the dimer.

It localises to the cytoplasm. The enzyme catalyses tRNA(Ser) + L-serine + ATP = L-seryl-tRNA(Ser) + AMP + diphosphate + H(+). The catalysed reaction is tRNA(Sec) + L-serine + ATP = L-seryl-tRNA(Sec) + AMP + diphosphate + H(+). It participates in aminoacyl-tRNA biosynthesis; selenocysteinyl-tRNA(Sec) biosynthesis; L-seryl-tRNA(Sec) from L-serine and tRNA(Sec): step 1/1. Functionally, catalyzes the attachment of serine to tRNA(Ser). Is also able to aminoacylate tRNA(Sec) with serine, to form the misacylated tRNA L-seryl-tRNA(Sec), which will be further converted into selenocysteinyl-tRNA(Sec). In Thermoplasma volcanium (strain ATCC 51530 / DSM 4299 / JCM 9571 / NBRC 15438 / GSS1), this protein is Serine--tRNA ligase.